Consider the following 303-residue polypeptide: uncharacterized protein (303 aa).

A Fe2OG dioxygenase domain is found at 173–300 (KLPELLGQLN…RFTVNGWIRK (128 aa)).

Fe(2+) serves as cofactor. It depends on L-ascorbate as a cofactor.

This is an uncharacterized protein from Synechocystis sp. (strain ATCC 27184 / PCC 6803 / Kazusa).